Reading from the N-terminus, the 347-residue chain is Ferredoxin--NADP reductase 1 (347 aa).

Residues threonine 26, aspartate 45, glutamine 53, tyrosine 58, valine 98, phenylalanine 133, aspartate 298, and serine 339 each coordinate FAD.

The protein belongs to the ferredoxin--NADP reductase type 2 family. As to quaternary structure, homodimer. Requires FAD as cofactor.

It carries out the reaction 2 reduced [2Fe-2S]-[ferredoxin] + NADP(+) + H(+) = 2 oxidized [2Fe-2S]-[ferredoxin] + NADPH. This Chloroherpeton thalassium (strain ATCC 35110 / GB-78) protein is Ferredoxin--NADP reductase 1.